We begin with the raw amino-acid sequence, 232 residues long: Ribose-5-phosphate isomerase A (232 aa).

Residues 28-31, 83-86, and 96-99 each bind substrate; these read TGST, DGAD, and KGGG. The active-site Proton acceptor is the Glu-105. Lys-123 contributes to the substrate binding site.

Belongs to the ribose 5-phosphate isomerase family. In terms of assembly, homodimer.

It catalyses the reaction aldehydo-D-ribose 5-phosphate = D-ribulose 5-phosphate. It participates in carbohydrate degradation; pentose phosphate pathway; D-ribose 5-phosphate from D-ribulose 5-phosphate (non-oxidative stage): step 1/1. Functionally, catalyzes the reversible conversion of ribose-5-phosphate to ribulose 5-phosphate. This chain is Ribose-5-phosphate isomerase A, found in Rhodopseudomonas palustris (strain ATCC BAA-98 / CGA009).